Here is a 389-residue protein sequence, read N- to C-terminus: Leucine aminopeptidase 1 (389 aa).

Residues 1–19 (MKLPALLTLGVAASTMVLA) form the signal peptide. The propeptide occupies 20–88 (AIAPDQVPLN…LPKVFPTPAV (69 aa)). Residues asparagine 96, asparagine 119, asparagine 149, asparagine 164, and asparagine 181 are each glycosylated (N-linked (GlcNAc...) asparagine). 2 residues coordinate Zn(2+): histidine 189 and aspartate 208. N-linked (GlcNAc...) asparagine glycosylation occurs at asparagine 233. The Zn(2+) site is built by glutamate 247 and aspartate 274. Cysteines 323 and 327 form a disulfide. Residue histidine 356 coordinates Zn(2+).

Belongs to the peptidase M28 family. M28E subfamily. In terms of assembly, monomer. Zn(2+) is required as a cofactor.

The protein localises to the secreted. Its function is as follows. Extracellular aminopeptidase that allows assimilation of proteinaceous substrates. The chain is Leucine aminopeptidase 1 (LAP1) from Paracoccidioides brasiliensis (strain Pb18).